We begin with the raw amino-acid sequence, 89 residues long: Cornifin (89 aa).

Residues 1-29 (MSSQQQKQPCTPPPQLQQQQVKQPCQPPP) form a disordered region. An N-acetylserine modification is found at serine 2. Repeat copies occupy residues 3-14 (SQQQKQPCTPPP), 18-29 (QQQVKQPCQPPP), 31-38 (EPCIPKTK), 39-46 (EPCLPKVP), 47-54 (EPCHPKVP), 55-62 (EPCQPKVP), 63-70 (EPCHPKVP), and 71-78 (EPCPSTVT). The tract at residues 3 to 29 (SQQQKQPCTPPPQLQQQQVKQPCQPPP) is 2 X 12 AA approximate repeats. Residues 31–78 (EPCIPKTKEPCLPKVPEPCHPKVPEPCQPKVPEPCHPKVPEPCPSTVT) form a 6 X 8 AA approximate tandem repeats region. Positions 68–89 (KVPEPCPSTVTPAPAQQKTKQK) are disordered. Polar residues predominate over residues 75-89 (STVTPAPAQQKTKQK).

It belongs to the cornifin (SPRR) family.

The protein localises to the cytoplasm. In terms of biological role, cross-linked envelope protein of keratinocytes. It is a keratinocyte protein that first appears in the cell cytosol, but ultimately becomes cross-linked to membrane proteins by transglutaminase. All that results in the formation of an insoluble envelope beneath the plasma membrane. This Macaca mulatta (Rhesus macaque) protein is Cornifin (SPRR1).